The sequence spans 575 residues: Dihydroxy-acid dehydratase (575 aa).

A [2Fe-2S] cluster-binding site is contributed by cysteine 64. Aspartate 96 is a Mg(2+) binding site. [2Fe-2S] cluster is bound at residue cysteine 137. Residues aspartate 138 and lysine 139 each contribute to the Mg(2+) site. Position 139 is an N6-carboxylysine (lysine 139). Cysteine 214 contributes to the [2Fe-2S] cluster binding site. Mg(2+) is bound at residue glutamate 465. Serine 491 functions as the Proton acceptor in the catalytic mechanism.

It belongs to the IlvD/Edd family. In terms of assembly, homodimer. The cofactor is [2Fe-2S] cluster. Requires Mg(2+) as cofactor.

It carries out the reaction (2R)-2,3-dihydroxy-3-methylbutanoate = 3-methyl-2-oxobutanoate + H2O. It catalyses the reaction (2R,3R)-2,3-dihydroxy-3-methylpentanoate = (S)-3-methyl-2-oxopentanoate + H2O. It participates in amino-acid biosynthesis; L-isoleucine biosynthesis; L-isoleucine from 2-oxobutanoate: step 3/4. Its pathway is amino-acid biosynthesis; L-valine biosynthesis; L-valine from pyruvate: step 3/4. Its function is as follows. Functions in the biosynthesis of branched-chain amino acids. Catalyzes the dehydration of (2R,3R)-2,3-dihydroxy-3-methylpentanoate (2,3-dihydroxy-3-methylvalerate) into 2-oxo-3-methylpentanoate (2-oxo-3-methylvalerate) and of (2R)-2,3-dihydroxy-3-methylbutanoate (2,3-dihydroxyisovalerate) into 2-oxo-3-methylbutanoate (2-oxoisovalerate), the penultimate precursor to L-isoleucine and L-valine, respectively. The protein is Dihydroxy-acid dehydratase of Mycobacterium bovis (strain ATCC BAA-935 / AF2122/97).